A 126-amino-acid chain; its full sequence is Putative regulator AldR (126 aa).

The protein belongs to the RutC family.

Its function is as follows. Implicated in the regulation of isoleucine biosynthesis. This is Putative regulator AldR (aldR) from Lactococcus lactis subsp. lactis (strain IL1403) (Streptococcus lactis).